The chain runs to 193 residues: dCTP deaminase (193 aa).

DCTP contacts are provided by residues 110–115 (RSSLAR), Asp-128, 136–138 (VLE), Tyr-171, Lys-178, and Gln-182. Glu-138 functions as the Proton donor/acceptor in the catalytic mechanism. Residues 174-193 (RKNAKYKDQQEAVASRISQD) are disordered.

It belongs to the dCTP deaminase family. Homotrimer.

It catalyses the reaction dCTP + H2O + H(+) = dUTP + NH4(+). It participates in pyrimidine metabolism; dUMP biosynthesis; dUMP from dCTP (dUTP route): step 1/2. Its function is as follows. Catalyzes the deamination of dCTP to dUTP. The polypeptide is dCTP deaminase (Shewanella sp. (strain W3-18-1)).